The following is a 214-amino-acid chain: Adenylate kinase (214 aa).

An ATP-binding site is contributed by 10 to 15 (GAGKGT). An NMP region spans residues 30–59 (STGDIFRANIKGNTPLGQKAKEYMDKGELV). AMP contacts are provided by residues threonine 31, arginine 36, 57–59 (ELV), 85–88 (GFPR), and glutamine 92. The LID stretch occupies residues 126–163 (GRRVCTNCGATYNVVFNPTKVEGICDVCNSPVIQRADD). ATP is bound at residue arginine 127. The Zn(2+) site is built by cysteine 130 and cysteine 133. 136-137 (TY) contacts ATP. Zn(2+) contacts are provided by cysteine 150 and cysteine 153. Arginine 160 and arginine 171 together coordinate AMP. Position 199 (glycine 199) interacts with ATP.

It belongs to the adenylate kinase family. As to quaternary structure, monomer.

It is found in the cytoplasm. The catalysed reaction is AMP + ATP = 2 ADP. It functions in the pathway purine metabolism; AMP biosynthesis via salvage pathway; AMP from ADP: step 1/1. Catalyzes the reversible transfer of the terminal phosphate group between ATP and AMP. Plays an important role in cellular energy homeostasis and in adenine nucleotide metabolism. This chain is Adenylate kinase, found in Ruminiclostridium cellulolyticum (strain ATCC 35319 / DSM 5812 / JCM 6584 / H10) (Clostridium cellulolyticum).